The following is a 532-amino-acid chain: Metal-staphylopine-binding protein CntA (532 aa).

An N-terminal signal peptide occupies residues 1–20; the sequence is MRKLTKMSAMLLASGLILTG. C21 carries N-palmitoyl cysteine lipidation. C21 carries S-diacylglycerol cysteine lipidation. R165, R418, and N448 together coordinate staphylopine.

Belongs to the bacterial solute-binding protein 5 family. As to quaternary structure, the complex is composed of two ATP-binding proteins (CntD and CntF), two transmembrane proteins (CntB and CntC) and a solute-binding protein (CntA).

The protein resides in the cell membrane. Nickel/cobalt import is reduced in the presence of zinc. Part of the ABC transporter complex CntABCDF (Opp1) involved in the uptake of metal in complex with the metallophore staphylopine (StP). Involved in the import of divalent metals ions such as nickel, cobalt and zinc. Binds the metal via the metallophore StP, and transfers the StP-metal complex to the membrane-bound permease. Binds one molecule of StP/metal. Binds StP/Co(2+) and StP/Ni(2+) tighter than StP/Zn(2+). Plays a major role in nickel/cobalt import in zinc-depleted conditions. Contributes to virulence. Required for full urease activity in vitro. The sequence is that of Metal-staphylopine-binding protein CntA from Staphylococcus aureus (strain NCTC 8325 / PS 47).